The following is a 314-amino-acid chain: Endo-beta-N-acetylglucosaminidase (314 aa).

Residues 1–47 form the signal peptide; sequence MQFGIVAAIADGGRTARAGGSVRPPRRPPASHTAWGLPRGRPTGQPH. The segment at 14-54 is disordered; the sequence is RTARAGGSVRPPRRPPASHTAWGLPRGRPTGQPHATPTKSG. In terms of domain architecture, GH18 spans 55–309; that stretch reads PTSIAYVEVN…SSMTKVLYGQ (255 aa). Residue Glu-175 is the Proton donor of the active site.

It belongs to the glycosyl hydrolase 18 family. In terms of assembly, monomer.

The protein resides in the secreted. It carries out the reaction an N(4)-(oligosaccharide-(1-&gt;3)-[oligosaccharide-(1-&gt;6)]-beta-D-Man-(1-&gt;4)-beta-D-GlcNAc-(1-&gt;4)-alpha-D-GlcNAc)-L-asparaginyl-[protein] + H2O = an oligosaccharide-(1-&gt;3)-[oligosaccharide-(1-&gt;6)]-beta-D-Man-(1-&gt;4)-D-GlcNAc + N(4)-(N-acetyl-beta-D-glucosaminyl)-L-asparaginyl-[protein]. Its function is as follows. Cleaves asparagine-linked oligomannose and hybrid, but not complex, oligosaccharides from glycoproteins. In Flavobacterium sp. (strain SK1022), this protein is Endo-beta-N-acetylglucosaminidase.